A 258-amino-acid polypeptide reads, in one-letter code: Type III pantothenate kinase (258 aa).

An ATP-binding site is contributed by aspartate 6–valine 13. Substrate is bound by residues tyrosine 100 and glycine 107–arginine 110. Catalysis depends on aspartate 109, which acts as the Proton acceptor. Aspartate 129 contributes to the K(+) binding site. Position 132 (threonine 132) interacts with ATP. Threonine 184 contributes to the substrate binding site.

This sequence belongs to the type III pantothenate kinase family. As to quaternary structure, homodimer. NH4(+) serves as cofactor. K(+) is required as a cofactor.

Its subcellular location is the cytoplasm. The enzyme catalyses (R)-pantothenate + ATP = (R)-4'-phosphopantothenate + ADP + H(+). The protein operates within cofactor biosynthesis; coenzyme A biosynthesis; CoA from (R)-pantothenate: step 1/5. Functionally, catalyzes the phosphorylation of pantothenate (Pan), the first step in CoA biosynthesis. The polypeptide is Type III pantothenate kinase (Desulfitobacterium hafniense (strain DSM 10664 / DCB-2)).